The following is a 221-amino-acid chain: Vesicle transport v-SNARE 13 (221 aa).

Topologically, residues 1 to 198 (MSQGFERYER…MTRRMNRNKW (198 aa)) are cytoplasmic. Residues 32–93 (EQKKQNLSEI…FKTEVKRITS (62 aa)) are a coiled coil. The chain crosses the membrane as a helical; Anchor for type IV membrane protein span at residues 199–219 (TIGAIITVLVLAIIFILYFKL). The Vesicular portion of the chain corresponds to 220–221 (TR).

The protein belongs to the VTI1 family. Forms SNARE complexes with t-SNAREs. In terms of tissue distribution, expressed at low levels in roots, stems, flowers and leaves.

The protein resides in the vacuole membrane. It is found in the prevacuolar compartment membrane. The protein localises to the endosome membrane. Its subcellular location is the early endosome membrane. Functionally, may function as a v-SNARE responsible for targeting vesicles involved in the secretory pathway. Involved in actin-dependent endosomal trafficking pathways associated with the vacuole within root hairs and root tip epidermal cells. Essential for cell wall organization and polarized root hair growth. Also required for the localization of SYP41 to the trans-Golgi network in root hair cells. This Arabidopsis thaliana (Mouse-ear cress) protein is Vesicle transport v-SNARE 13.